A 146-amino-acid polypeptide reads, in one-letter code: Snaclec stejaggregin-B subunit beta-1 (146 aa).

The signal sequence occupies residues 1 to 23; sequence MGRFIFVSFGLLVVFLSLSGTGA. 3 cysteine pairs are disulfide-bonded: Cys-25/Cys-36, Cys-53/Cys-142, and Cys-119/Cys-134. In terms of domain architecture, C-type lectin spans 32 to 143; that stretch reads YDLYCYRVFQ…CSQTYPFVCK (112 aa).

It belongs to the snaclec family. Heteromultimer; disulfide-linked. In terms of tissue distribution, expressed by the venom gland.

The protein resides in the secreted. Interferes with one step of hemostasis (modulation of platelet aggregation, or coagulation cascade, for example). This Trimeresurus stejnegeri (Chinese green tree viper) protein is Snaclec stejaggregin-B subunit beta-1.